A 318-amino-acid polypeptide reads, in one-letter code: 1-aminocyclopropane-1-carboxylate oxidase 1 (318 aa).

A Fe2OG dioxygenase domain is found at 153 to 254 (PTFGTKVSNY…RMSIASFYNP (102 aa)). Fe cation contacts are provided by His-177, Asp-179, and His-234.

This sequence belongs to the iron/ascorbate-dependent oxidoreductase family. Fe cation is required as a cofactor. In terms of tissue distribution, fruit.

It catalyses the reaction 1-aminocyclopropane-1-carboxylate + L-ascorbate + O2 = ethene + L-dehydroascorbate + hydrogen cyanide + CO2 + 2 H2O. Its pathway is alkene biosynthesis; ethylene biosynthesis via S-adenosyl-L-methionine; ethylene from S-adenosyl-L-methionine: step 2/2. This chain is 1-aminocyclopropane-1-carboxylate oxidase 1 (ACO1), found in Cucumis melo (Muskmelon).